The sequence spans 283 residues: MKCYFTDHRGEQSPTDGTTLSLTSPESTEESVEVFWPGTIQREGSSPRPGPAIPREEGLYFAARDRGMRDWSSSPSSESSEYQSYSQYQSCCSCMCDEDNAAPQSVCAFYTHVQTVRGVAVAWETEAGFEPVTRKPRIHEAQFIKRQRWNGSSFEMASNTDMRWDLEACKSNCSPEPEDIDLLECCLQELREPPDWLVTTNYGVRCVACCRVLPSLDALLEHAQHGIREGFSCQIFFEEMLERRRAQGQAHDQQLEEEQSPSDNSECSRPQGEVLSAQQQEKQ.

Residues 1-11 (MKCYFTDHRGE) are compositionally biased toward basic and acidic residues. Disordered regions lie at residues 1–58 (MKCY…REEG) and 246–283 (AQGQ…QEKQ).

The protein belongs to the FAM170 family. As to quaternary structure, interacts with GOPC. Exclusively expressed in adult testis.

The protein localises to the cytoplasmic vesicle. It localises to the secretory vesicle. It is found in the acrosome. The protein resides in the acrosome outer membrane. Its function is as follows. Plays a role in fertilization through the acrosome reaction. The chain is Protein FAM170B from Homo sapiens (Human).